A 417-amino-acid polypeptide reads, in one-letter code: Gamma-glutamyl phosphate reductase (417 aa).

This sequence belongs to the gamma-glutamyl phosphate reductase family.

It localises to the cytoplasm. It carries out the reaction L-glutamate 5-semialdehyde + phosphate + NADP(+) = L-glutamyl 5-phosphate + NADPH + H(+). It functions in the pathway amino-acid biosynthesis; L-proline biosynthesis; L-glutamate 5-semialdehyde from L-glutamate: step 2/2. In terms of biological role, catalyzes the NADPH-dependent reduction of L-glutamate 5-phosphate into L-glutamate 5-semialdehyde and phosphate. The product spontaneously undergoes cyclization to form 1-pyrroline-5-carboxylate. The sequence is that of Gamma-glutamyl phosphate reductase from Escherichia coli O17:K52:H18 (strain UMN026 / ExPEC).